Here is a 198-residue protein sequence, read N- to C-terminus: Clytin (198 aa).

Residues 1-9 constitute a propeptide that is removed on maturation; the sequence is MADTASKYA. EF-hand domains follow at residues 20–55, 60–95, 119–148, and 149–184; these read KWVNRHKFMFNFLDINGDGKITLDEIVSKASDDICA, TPEQTKRHQDAVEAFFKKIGMDYGKEVEFPAFVDGW, EAVFDIFDKDGSGSISLDEWKAYGRISGIC, and SSDEDAEKTFKHCDLDNSGKLDVDEMTRQHLGFWYT. Ca(2+) is bound by residues Asp33, Asn35, Asp37, Lys39, and Glu44. Ca(2+) is bound by residues Asp126, Asp128, Ser130, Ser132, Glu137, Asp162, Asp164, Ser166, Lys168, and Glu173.

The protein belongs to the aequorin family.

Its function is as follows. Ca(2+)-dependent bioluminescence photoprotein. Displays an emission peak at 470 nm (blue light). Trace amounts of calcium ion trigger the intramolecular oxidation of the chromophore, coelenterazine into coelenteramide and CO(2) with the concomitant emission of light. This is Clytin from Clytia gregaria (Gregarious jellyfish).